The following is a 313-amino-acid chain: Pyrimidine-specific ribonucleoside hydrolase RihB (313 aa).

The active-site Proton acceptor is the Asp-11. Asp-11, Asp-16, and Val-124 together coordinate Ca(2+). The substrate site is built by Gln-227 and His-239. Residue Asp-240 participates in Ca(2+) binding.

It belongs to the IUNH family. RihB subfamily. Homotetramer. Ca(2+) is required as a cofactor.

The catalysed reaction is a pyrimidine ribonucleoside + H2O = a pyrimidine nucleobase + D-ribose. Functionally, hydrolyzes cytidine or uridine to ribose and cytosine or uracil, respectively. Has a clear preference for cytidine over uridine. Strictly specific for ribonucleosides. This chain is Pyrimidine-specific ribonucleoside hydrolase RihB, found in Escherichia coli (strain K12 / DH10B).